The chain runs to 301 residues: MSTYPVTLPTKEERHKLFGSVPPIKGTKPTEKDKMIDLQNTPKNFLFALDAVGISNVKHPVVIQDGETTQATIATFELSTSLVQDRKGINMSRLTEQLDQYHNEGWVVTNESLIQFARELAERMEQSEGQLTIRYPWFFTRKAPATGLSGLMNAEVWQTVSVNTETNEATLSVGLTINVTTLCPCSKEISEYSAHNQRGYVTMEASLRDEADDFNWKQELLDAAESNASAPLHPVLKRPDEKRVTEMAYENPRFVEDMVRLIAADLYEMDPIASFFVECRNEETIHQHDAIARITFDKDAQ.

It belongs to the GTP cyclohydrolase IV family.

It carries out the reaction GTP + H2O = 7,8-dihydroneopterin 3'-triphosphate + formate + H(+). It functions in the pathway cofactor biosynthesis; 7,8-dihydroneopterin triphosphate biosynthesis; 7,8-dihydroneopterin triphosphate from GTP: step 1/1. Converts GTP to 7,8-dihydroneopterin triphosphate. This is GTP cyclohydrolase FolE2 from Exiguobacterium sibiricum (strain DSM 17290 / CCUG 55495 / CIP 109462 / JCM 13490 / 255-15).